A 181-amino-acid polypeptide reads, in one-letter code: Probable cobalt-precorrin-6B C(15)-methyltransferase (decarboxylating) (181 aa).

S-adenosyl-L-methionine is bound by residues Thr16, 40–44, Asp61, and Ala89; that span reads GCGSG.

Belongs to the methyltransferase superfamily. Archaeal-type CbiT family.

It carries out the reaction Co-precorrin-6B + S-adenosyl-L-methionine = Co-precorrin-7 + S-adenosyl-L-homocysteine + CO2. Its pathway is cofactor biosynthesis; adenosylcobalamin biosynthesis; cob(II)yrinate a,c-diamide from sirohydrochlorin (anaerobic route): step 8/10. In terms of biological role, catalyzes the methylation of C-15 in cobalt-precorrin-6B followed by the decarboxylation of C-12 to form cobalt-precorrin-7. The chain is Probable cobalt-precorrin-6B C(15)-methyltransferase (decarboxylating) from Methanococcus maripaludis (strain C6 / ATCC BAA-1332).